A 161-amino-acid polypeptide reads, in one-letter code: Phosphopantetheine adenylyltransferase (161 aa).

Ser10 is a substrate binding site. Residues 10–11 (SF) and His18 each bind ATP. Residues Lys42, Leu74, and Arg88 each contribute to the substrate site. Residues 88-89 (RG), Glu99, and 124-130 (YSFLSSS) contribute to the ATP site.

Belongs to the bacterial CoaD family. In terms of assembly, homohexamer. It depends on Mg(2+) as a cofactor.

Its subcellular location is the cytoplasm. It carries out the reaction (R)-4'-phosphopantetheine + ATP + H(+) = 3'-dephospho-CoA + diphosphate. It participates in cofactor biosynthesis; coenzyme A biosynthesis; CoA from (R)-pantothenate: step 4/5. Functionally, reversibly transfers an adenylyl group from ATP to 4'-phosphopantetheine, yielding dephospho-CoA (dPCoA) and pyrophosphate. This is Phosphopantetheine adenylyltransferase from Bacillus subtilis (strain 168).